The sequence spans 229 residues: 2-C-methyl-D-erythritol 4-phosphate cytidylyltransferase (229 aa).

The protein belongs to the IspD/TarI cytidylyltransferase family. IspD subfamily.

The catalysed reaction is 2-C-methyl-D-erythritol 4-phosphate + CTP + H(+) = 4-CDP-2-C-methyl-D-erythritol + diphosphate. Its pathway is isoprenoid biosynthesis; isopentenyl diphosphate biosynthesis via DXP pathway; isopentenyl diphosphate from 1-deoxy-D-xylulose 5-phosphate: step 2/6. In terms of biological role, catalyzes the formation of 4-diphosphocytidyl-2-C-methyl-D-erythritol from CTP and 2-C-methyl-D-erythritol 4-phosphate (MEP). The protein is 2-C-methyl-D-erythritol 4-phosphate cytidylyltransferase of Neisseria gonorrhoeae (strain ATCC 700825 / FA 1090).